The following is a 147-amino-acid chain: Small ribosomal subunit protein uS5 (147 aa).

The region spanning 9-72 (FEEVIVDIGR…DDAFKNIVEV (64 aa)) is the S5 DRBM domain.

This sequence belongs to the universal ribosomal protein uS5 family. As to quaternary structure, part of the 30S ribosomal subunit. Contacts proteins S4 and S8.

Its function is as follows. With S4 and S12 plays an important role in translational accuracy. In terms of biological role, located at the back of the 30S subunit body where it stabilizes the conformation of the head with respect to the body. The polypeptide is Small ribosomal subunit protein uS5 (Campylobacter jejuni subsp. jejuni serotype O:6 (strain 81116 / NCTC 11828)).